Here is a 346-residue protein sequence, read N- to C-terminus: Formimidoylglutamase (346 aa).

6 residues coordinate Mn(2+): histidine 145, aspartate 180, histidine 182, aspartate 184, aspartate 271, and aspartate 273.

It belongs to the arginase family. Mn(2+) serves as cofactor.

It catalyses the reaction N-formimidoyl-L-glutamate + H2O = formamide + L-glutamate. It participates in amino-acid degradation; L-histidine degradation into L-glutamate; L-glutamate from N-formimidoyl-L-glutamate (hydrolase route): step 1/1. In terms of biological role, catalyzes the conversion of N-formimidoyl-L-glutamate to L-glutamate and formamide. The sequence is that of Formimidoylglutamase from Psychrobacter cryohalolentis (strain ATCC BAA-1226 / DSM 17306 / VKM B-2378 / K5).